The chain runs to 159 residues: Small ribosomal subunit protein uS5c (159 aa).

One can recognise an S5 DRBM domain in the interval 17-80 (WEERVVSVQR…TDGKKNVITV (64 aa)).

This sequence belongs to the universal ribosomal protein uS5 family. As to quaternary structure, part of the 30S ribosomal subunit. Contacts protein S4.

Its subcellular location is the plastid. It is found in the chloroplast. Functionally, with S4 and S12 plays an important role in translational accuracy. This Emiliania huxleyi (Coccolithophore) protein is Small ribosomal subunit protein uS5c (rps5).